Reading from the N-terminus, the 580-residue chain is Multidrug resistance-like ATP-binding protein MdlB (580 aa).

The ABC transmembrane type-1 domain occupies 25–310 (LILAFIFLLS…ITIQQSVLQQ (286 aa)). The next 6 helical transmembrane spans lie at 26-46 (ILAF…PILI), 61-81 (LLII…SVFL), 150-170 (IILI…MALV), 173-193 (FILP…TPLL), 247-267 (LDGF…LCNF), and 268-288 (MFLF…YAFI). The ABC transporter domain maps to 341-575 (INIQNVSFYH…KSCYYKMYKF (235 aa)). 375–382 (GHTGSGKS) contributes to the ATP binding site.

Belongs to the ABC transporter superfamily. Drug exporter-2 (TC 3.A.1.117) family.

It is found in the cell membrane. The catalysed reaction is ATP + H2O + xenobioticSide 1 = ADP + phosphate + xenobioticSide 2.. This Buchnera aphidicola subsp. Acyrthosiphon pisum (strain APS) (Acyrthosiphon pisum symbiotic bacterium) protein is Multidrug resistance-like ATP-binding protein MdlB (mdlB).